The sequence spans 173 residues: Small ribosomal subunit protein uS5 (173 aa).

Residues 17–80 enclose the S5 DRBM domain; the sequence is LREKMIAVNR…EEARRNMVKV (64 aa).

Belongs to the universal ribosomal protein uS5 family. As to quaternary structure, part of the 30S ribosomal subunit. Contacts proteins S4 and S8.

In terms of biological role, with S4 and S12 plays an important role in translational accuracy. Located at the back of the 30S subunit body where it stabilizes the conformation of the head with respect to the body. This is Small ribosomal subunit protein uS5 from Acidovorax sp. (strain JS42).